The sequence spans 175 residues: Methylated-DNA--protein-cysteine methyltransferase (175 aa).

Catalysis depends on C142, which acts as the Nucleophile; methyl group acceptor.

It belongs to the MGMT family.

It is found in the cytoplasm. The enzyme catalyses a 6-O-methyl-2'-deoxyguanosine in DNA + L-cysteinyl-[protein] = S-methyl-L-cysteinyl-[protein] + a 2'-deoxyguanosine in DNA. The catalysed reaction is a 4-O-methyl-thymidine in DNA + L-cysteinyl-[protein] = a thymidine in DNA + S-methyl-L-cysteinyl-[protein]. In terms of biological role, involved in the cellular defense against the biological effects of O6-methylguanine (O6-MeG) and O4-methylthymine (O4-MeT) in DNA. Repairs the methylated nucleobase in DNA by stoichiometrically transferring the methyl group to a cysteine residue in the enzyme. This is a suicide reaction: the enzyme is irreversibly inactivated. The sequence is that of Methylated-DNA--protein-cysteine methyltransferase from Thermococcus sibiricus (strain DSM 12597 / MM 739).